The sequence spans 318 residues: tRNA dimethylallyltransferase (318 aa).

ATP is bound at residue 21-28; the sequence is GPTATGKS. Residue 23–28 participates in substrate binding; it reads TATGKS. The interaction with substrate tRNA stretch occupies residues 46 to 49; that stretch reads DSMQ.

Belongs to the IPP transferase family. In terms of assembly, monomer. Mg(2+) serves as cofactor.

It carries out the reaction adenosine(37) in tRNA + dimethylallyl diphosphate = N(6)-dimethylallyladenosine(37) in tRNA + diphosphate. In terms of biological role, catalyzes the transfer of a dimethylallyl group onto the adenine at position 37 in tRNAs that read codons beginning with uridine, leading to the formation of N6-(dimethylallyl)adenosine (i(6)A). The polypeptide is tRNA dimethylallyltransferase (Acidothermus cellulolyticus (strain ATCC 43068 / DSM 8971 / 11B)).